The primary structure comprises 459 residues: Mitochondrial distribution and morphology protein 34 (459 aa).

An SMP-LTD domain is found at 1–190 (MSFRFNEAVF…LPSLIFNTSQ (190 aa)). Over residues 338 to 347 (RSNSNDDNAK) the composition is skewed to basic and acidic residues. Residues 338 to 375 (RSNSNDDNAKPRRRKIKCKKTRTPSNLQSQGEQAVDDS) are disordered. The span at 348–359 (PRRRKIKCKKTR) shows a compositional bias: basic residues.

The protein belongs to the MDM34 family. As to quaternary structure, component of the ER-mitochondria encounter structure (ERMES) or MDM complex, composed of MMM1, MDM10, MDM12 and MDM34. Ubiquitinated by a SCF (SKP1-CUL1-F-box protein) E3 ubiquitin-protein ligase complex containing the F-box protein MDM30. Ubiquitination is important for mitochondrial integrity.

It is found in the mitochondrion outer membrane. Component of the ERMES/MDM complex, which serves as a molecular tether to connect the endoplasmic reticulum (ER) and mitochondria. Components of this complex are involved in the control of mitochondrial shape and protein biogenesis, and function in nonvesicular lipid trafficking between the ER and mitochondria. MDM34 is required for the interaction of the ER-resident membrane protein MMM1 and the outer mitochondrial membrane-resident beta-barrel protein MDM10. This Saccharomyces cerevisiae (strain RM11-1a) (Baker's yeast) protein is Mitochondrial distribution and morphology protein 34.